A 163-amino-acid polypeptide reads, in one-letter code: Globin CTT-Z (163 aa).

The signal sequence occupies residues 1-16; it reads MKFFAVLALCIVGAIA. In terms of domain architecture, Globin spans 18-162; that stretch reads PLTSDEAALV…VYTAVFQIVT (145 aa). Heme b is bound by residues H76 and H111.

The protein belongs to the globin family.

The polypeptide is Globin CTT-Z (CTT-Z) (Chironomus thummi thummi (Midge)).